A 146-amino-acid polypeptide reads, in one-letter code: Hemoglobin subunit beta (146 aa).

Residues 2-146 (PFSAHEEKLI…VAAALSVEYY (145 aa)) enclose the Globin domain. Residues His63 and His92 each contribute to the heme b site.

It belongs to the globin family. Heterotetramer of two alpha chains and two beta chains. When oxygenated in vitro, exists virtually only in polymeric form. When deoxygenated, forms tetramers, octamers and larger polymers. As to expression, red blood cells.

In terms of biological role, involved in oxygen transport from the lung to the various peripheral tissues. The chain is Hemoglobin subunit beta from Paleosuchus palpebrosus (Cuvier's smooth-fronted caiman).